Here is a 336-residue protein sequence, read N- to C-terminus: MLIAQRPTLSEEVVSDNRSRFIIEPLEPGFGYTLGNSLRRTLLSSIPGAAVTSIRIDGVLHEFTTVPGVKEDVTEIILNIKNLSVSSEHDEPVVAYLRKQGPGVVTAADIAPPAGVEFHNPDLHIATLNSKGKFELELTIERGRGYVSAAQNKSGDAEIGRIPVDSIYSPVLKVTFRVEATRVEQRTDFDRLIVDVETKQAIAPRDAVASAGTTLVELFGLARELNTAAEGIEIGPSPTDAALAADMALPIEDLDLTVRSYNCLKREGIHTVGELVARSEADLMDIRNFGAKSIDEVKAKLVELGLSLKDSPPGFDLAARAAAIDESDDAFGDDEL.

Residues 1-226 (MLIAQRPTLS…ELFGLARELN (226 aa)) are alpha N-terminal domain (alpha-NTD). The alpha C-terminal domain (alpha-CTD) stretch occupies residues 243–336 (LAADMALPIE…SDDAFGDDEL (94 aa)).

The protein belongs to the RNA polymerase alpha chain family. Homodimer. The RNAP catalytic core consists of 2 alpha, 1 beta, 1 beta' and 1 omega subunit. When a sigma factor is associated with the core the holoenzyme is formed, which can initiate transcription.

It carries out the reaction RNA(n) + a ribonucleoside 5'-triphosphate = RNA(n+1) + diphosphate. Functionally, DNA-dependent RNA polymerase catalyzes the transcription of DNA into RNA using the four ribonucleoside triphosphates as substrates. The chain is DNA-directed RNA polymerase subunit alpha from Renibacterium salmoninarum (strain ATCC 33209 / DSM 20767 / JCM 11484 / NBRC 15589 / NCIMB 2235).